Consider the following 208-residue polypeptide: MAEIVLNVEVRERTGTGGARDTRRSGMVPGVLYGGDKDPVAIAVRANEFRKALYTGKLLGHLVTLKYGNETQPVIAKAVDMHPVTDEPQHFDLYRVDEHQQIKIEVPVHFTNQDDSPGLKRGGTLNVALHTLTVSCPADSIPEEIVFDLTGLEIGATIRVADLKLPAKAEAAVDGETVVASVAGAMAEVAEEAAEGAEGEAAAEGGEE.

It belongs to the bacterial ribosomal protein bL25 family. CTC subfamily. As to quaternary structure, part of the 50S ribosomal subunit; part of the 5S rRNA/L5/L18/L25 subcomplex. Contacts the 5S rRNA. Binds to the 5S rRNA independently of L5 and L18.

Functionally, this is one of the proteins that binds to the 5S RNA in the ribosome where it forms part of the central protuberance. In Phenylobacterium zucineum (strain HLK1), this protein is Large ribosomal subunit protein bL25.